The following is a 159-amino-acid chain: 2-C-methyl-D-erythritol 2,4-cyclodiphosphate synthase (159 aa).

A divalent metal cation-binding residues include aspartate 8 and histidine 10. Residues 8–10 (DVH) and 34–35 (HS) each bind 4-CDP-2-C-methyl-D-erythritol 2-phosphate. Residue histidine 42 participates in a divalent metal cation binding. 4-CDP-2-C-methyl-D-erythritol 2-phosphate contacts are provided by residues 56–58 (DIG), 61–65 (FPDTD), 100–106 (AQAPKML), 132–135 (TTTE), phenylalanine 139, and arginine 142.

The protein belongs to the IspF family. Homotrimer. It depends on a divalent metal cation as a cofactor.

The enzyme catalyses 4-CDP-2-C-methyl-D-erythritol 2-phosphate = 2-C-methyl-D-erythritol 2,4-cyclic diphosphate + CMP. The protein operates within isoprenoid biosynthesis; isopentenyl diphosphate biosynthesis via DXP pathway; isopentenyl diphosphate from 1-deoxy-D-xylulose 5-phosphate: step 4/6. Involved in the biosynthesis of isopentenyl diphosphate (IPP) and dimethylallyl diphosphate (DMAPP), two major building blocks of isoprenoid compounds. Catalyzes the conversion of 4-diphosphocytidyl-2-C-methyl-D-erythritol 2-phosphate (CDP-ME2P) to 2-C-methyl-D-erythritol 2,4-cyclodiphosphate (ME-CPP) with a corresponding release of cytidine 5-monophosphate (CMP). In Salmonella choleraesuis (strain SC-B67), this protein is 2-C-methyl-D-erythritol 2,4-cyclodiphosphate synthase.